Reading from the N-terminus, the 417-residue chain is Gamma-glutamyl phosphate reductase (417 aa).

The protein belongs to the gamma-glutamyl phosphate reductase family.

The protein resides in the cytoplasm. It catalyses the reaction L-glutamate 5-semialdehyde + phosphate + NADP(+) = L-glutamyl 5-phosphate + NADPH + H(+). Its pathway is amino-acid biosynthesis; L-proline biosynthesis; L-glutamate 5-semialdehyde from L-glutamate: step 2/2. Catalyzes the NADPH-dependent reduction of L-glutamate 5-phosphate into L-glutamate 5-semialdehyde and phosphate. The product spontaneously undergoes cyclization to form 1-pyrroline-5-carboxylate. The polypeptide is Gamma-glutamyl phosphate reductase (Phocaeicola vulgatus (strain ATCC 8482 / DSM 1447 / JCM 5826 / CCUG 4940 / NBRC 14291 / NCTC 11154) (Bacteroides vulgatus)).